The sequence spans 505 residues: 2,3-bisphosphoglycerate-independent phosphoglycerate mutase (505 aa).

Mn(2+)-binding residues include Asp-13 and Ser-63. Residue Ser-63 is the Phosphoserine intermediate of the active site. Substrate is bound by residues His-124, 153-154 (RD), Arg-183, Arg-189, 254-257 (RADR), and Lys-330. The Mn(2+) site is built by Asp-396, His-400, Asp-437, His-438, and His-456.

The protein belongs to the BPG-independent phosphoglycerate mutase family. In terms of assembly, monomer. Requires Mn(2+) as cofactor.

It carries out the reaction (2R)-2-phosphoglycerate = (2R)-3-phosphoglycerate. The protein operates within carbohydrate degradation; glycolysis; pyruvate from D-glyceraldehyde 3-phosphate: step 3/5. Catalyzes the interconversion of 2-phosphoglycerate and 3-phosphoglycerate. This chain is 2,3-bisphosphoglycerate-independent phosphoglycerate mutase, found in Ruegeria pomeroyi (strain ATCC 700808 / DSM 15171 / DSS-3) (Silicibacter pomeroyi).